Reading from the N-terminus, the 156-residue chain is ATP synthase subunit b (156 aa).

A helical membrane pass occupies residues 7–29; it reads LIGQMGTFLVFWWFVNKVIWPMF.

Belongs to the ATPase B chain family. In terms of assembly, F-type ATPases have 2 components, F(1) - the catalytic core - and F(0) - the membrane proton channel. F(1) has five subunits: alpha(3), beta(3), gamma(1), delta(1), epsilon(1). F(0) has three main subunits: a(1), b(2) and c(10-14). The alpha and beta chains form an alternating ring which encloses part of the gamma chain. F(1) is attached to F(0) by a central stalk formed by the gamma and epsilon chains, while a peripheral stalk is formed by the delta and b chains.

It is found in the cell inner membrane. Functionally, f(1)F(0) ATP synthase produces ATP from ADP in the presence of a proton or sodium gradient. F-type ATPases consist of two structural domains, F(1) containing the extramembraneous catalytic core and F(0) containing the membrane proton channel, linked together by a central stalk and a peripheral stalk. During catalysis, ATP synthesis in the catalytic domain of F(1) is coupled via a rotary mechanism of the central stalk subunits to proton translocation. Its function is as follows. Component of the F(0) channel, it forms part of the peripheral stalk, linking F(1) to F(0). The polypeptide is ATP synthase subunit b (Dichelobacter nodosus (strain VCS1703A)).